The following is a 204-amino-acid chain: dITP/XTP pyrophosphatase (204 aa).

8–13 (SNNAKK) provides a ligand contact to substrate. Mg(2+)-binding residues include E43 and D72. D72 serves as the catalytic Proton acceptor. Residues S73, 155-158 (FGYD), K180, and 185-186 (HR) each bind substrate.

The protein belongs to the HAM1 NTPase family. In terms of assembly, homodimer. Mg(2+) serves as cofactor.

It carries out the reaction XTP + H2O = XMP + diphosphate + H(+). The enzyme catalyses dITP + H2O = dIMP + diphosphate + H(+). It catalyses the reaction ITP + H2O = IMP + diphosphate + H(+). Pyrophosphatase that catalyzes the hydrolysis of nucleoside triphosphates to their monophosphate derivatives, with a high preference for the non-canonical purine nucleotides XTP (xanthosine triphosphate), dITP (deoxyinosine triphosphate) and ITP. Seems to function as a house-cleaning enzyme that removes non-canonical purine nucleotides from the nucleotide pool, thus preventing their incorporation into DNA/RNA and avoiding chromosomal lesions. This Cutibacterium acnes (strain DSM 16379 / KPA171202) (Propionibacterium acnes) protein is dITP/XTP pyrophosphatase.